We begin with the raw amino-acid sequence, 342 residues long: Galactose mutarotase (342 aa).

At Ser-14 the chain carries Phosphoserine. Beta-D-galactose-binding positions include 81–82, His-107, 176–178, Asp-243, Gln-279, and Glu-307; these read NR and HSY. The active-site Proton donor is His-176. Glu-307 functions as the Proton acceptor in the catalytic mechanism.

The protein belongs to the aldose epimerase family. Monomer.

Its subcellular location is the cytoplasm. The enzyme catalyses alpha-D-galactose = beta-D-galactose. The catalysed reaction is alpha-D-glucose = beta-D-glucose. It participates in carbohydrate metabolism; hexose metabolism. The protein operates within carbohydrate metabolism; galactose metabolism. In terms of biological role, mutarotase that catalyzes the interconversion of beta-D-galactose and alpha-D-galactose during galactose metabolism. Beta-D-galactose is metabolized in the liver into glucose 1-phosphate, the primary metabolic fuel, by the action of four enzymes that constitute the Leloir pathway: GALM, GALK1 (galactokinase), GALT (galactose-1-phosphate uridylyltransferase) and GALE (UDP-galactose-4'-epimerase). Involved in the maintenance of the equilibrium between the beta- and alpha-anomers of galactose, therefore ensuring a sufficient supply of the alpha-anomer for GALK1. Also active on D-glucose although shows a preference for galactose over glucose. This is Galactose mutarotase from Mus musculus (Mouse).